Here is a 190-residue protein sequence, read N- to C-terminus: Xanthine phosphoribosyltransferase (190 aa).

Residues L20 and N27 each coordinate xanthine. 128-132 provides a ligand contact to 5-phospho-alpha-D-ribose 1-diphosphate; that stretch reads ANGKA. Residue K156 coordinates xanthine.

It belongs to the purine/pyrimidine phosphoribosyltransferase family. Xpt subfamily. As to quaternary structure, homodimer.

It localises to the cytoplasm. The enzyme catalyses XMP + diphosphate = xanthine + 5-phospho-alpha-D-ribose 1-diphosphate. The protein operates within purine metabolism; XMP biosynthesis via salvage pathway; XMP from xanthine: step 1/1. Functionally, converts the preformed base xanthine, a product of nucleic acid breakdown, to xanthosine 5'-monophosphate (XMP), so it can be reused for RNA or DNA synthesis. This chain is Xanthine phosphoribosyltransferase, found in Pseudomonas entomophila (strain L48).